A 496-amino-acid polypeptide reads, in one-letter code: MTTEHFEELNDQQIIRREKMAALAEQGIDPFGKRFERTANSGQLKEKYADKSKEELHDLADTATIAGRLMTKRGKGKVGFAHIQDREGQIQIYVRKDEVGEENYEIFKKADLGDFLGVEGEVMRTDMGELSIKATHITHLSKALRPLPEKFHGLTDVETIYRKRYLDLISNRESFNRFVTRSKIISEIRRYLDGQGFLEVETPVLHNEAGGAAARPFITHHNAQNIDMVLRIATELHLKRLIVGGMERVYEIGRIFRNEGMDATHNPEFTSIEVYQAYADFQDIMDLTEGIIQHAAISVCGDGPINYQGTEIKINEPFKRVHMVDAIKEITGVDFWQDMSFEEATALAKEKNVPLEKHFTEVGHVINAFFEEFVEETLTQPTFIYGHPVAVSPLAKKNPEDPRFTDRFELFIMTKEYANAFTELNDPIDQLSRFEAQAKAKELGDDEATGIDYDYVEALEYGMPPTGGLGIGIDRLVMLLTDVTTIRDVLLFPTMK.

Positions 409 and 416 each coordinate Mg(2+).

The protein belongs to the class-II aminoacyl-tRNA synthetase family. As to quaternary structure, homodimer. It depends on Mg(2+) as a cofactor.

It is found in the cytoplasm. The enzyme catalyses tRNA(Lys) + L-lysine + ATP = L-lysyl-tRNA(Lys) + AMP + diphosphate. This Streptococcus gordonii (strain Challis / ATCC 35105 / BCRC 15272 / CH1 / DL1 / V288) protein is Lysine--tRNA ligase.